The sequence spans 142 residues: MKTFVAKPETVKRDWYVVDAEGKTLGRLASEIASRLRGKHKAEYTPHVDTGDYIIVVNAEKVAVTGNKAKGKVYYRHSEFPGGLKTITFEKLIAKKPEMVLELAVKGMLPRGPLGRAMYRKLKVYAGTEHNHVAQQPQVLDI.

This sequence belongs to the universal ribosomal protein uL13 family. Part of the 50S ribosomal subunit.

Its function is as follows. This protein is one of the early assembly proteins of the 50S ribosomal subunit, although it is not seen to bind rRNA by itself. It is important during the early stages of 50S assembly. In Vibrio atlanticus (strain LGP32) (Vibrio splendidus (strain Mel32)), this protein is Large ribosomal subunit protein uL13.